The chain runs to 273 residues: Shikimate dehydrogenase (NADP(+)) (273 aa).

Shikimate is bound by residues 15–17 and T62; that span reads SLS. K66 (proton acceptor) is an active-site residue. E78 contributes to the NADP(+) binding site. Shikimate-binding residues include N87 and D102. Residues 126–130, 149–154, I215, and G238 each bind NADP(+); these read GAGGA and NRTPER.

This sequence belongs to the shikimate dehydrogenase family. As to quaternary structure, homodimer.

The enzyme catalyses shikimate + NADP(+) = 3-dehydroshikimate + NADPH + H(+). It participates in metabolic intermediate biosynthesis; chorismate biosynthesis; chorismate from D-erythrose 4-phosphate and phosphoenolpyruvate: step 4/7. Functionally, involved in the biosynthesis of the chorismate, which leads to the biosynthesis of aromatic amino acids. Catalyzes the reversible NADPH linked reduction of 3-dehydroshikimate (DHSA) to yield shikimate (SA). This Desulfitobacterium hafniense (strain Y51) protein is Shikimate dehydrogenase (NADP(+)).